A 153-amino-acid chain; its full sequence is SsrA-binding protein (153 aa).

Basic and acidic residues predominate over residues 132-142; the sequence is ALKRKEAEREA. A disordered region spans residues 132 to 153; that stretch reads ALKRKEAEREAQSAMKRYAKGY.

The protein belongs to the SmpB family.

The protein resides in the cytoplasm. In terms of biological role, required for rescue of stalled ribosomes mediated by trans-translation. Binds to transfer-messenger RNA (tmRNA), required for stable association of tmRNA with ribosomes. tmRNA and SmpB together mimic tRNA shape, replacing the anticodon stem-loop with SmpB. tmRNA is encoded by the ssrA gene; the 2 termini fold to resemble tRNA(Ala) and it encodes a 'tag peptide', a short internal open reading frame. During trans-translation Ala-aminoacylated tmRNA acts like a tRNA, entering the A-site of stalled ribosomes, displacing the stalled mRNA. The ribosome then switches to translate the ORF on the tmRNA; the nascent peptide is terminated with the 'tag peptide' encoded by the tmRNA and targeted for degradation. The ribosome is freed to recommence translation, which seems to be the essential function of trans-translation. The sequence is that of SsrA-binding protein from Campylobacter hominis (strain ATCC BAA-381 / DSM 21671 / CCUG 45161 / LMG 19568 / NCTC 13146 / CH001A).